A 235-amino-acid polypeptide reads, in one-letter code: Urease accessory protein UreF (235 aa).

It belongs to the UreF family. As to quaternary structure, ureD, UreF and UreG form a complex that acts as a GTP-hydrolysis-dependent molecular chaperone, activating the urease apoprotein by helping to assemble the nickel containing metallocenter of UreC. The UreE protein probably delivers the nickel.

Its subcellular location is the cytoplasm. Its function is as follows. Required for maturation of urease via the functional incorporation of the urease nickel metallocenter. This chain is Urease accessory protein UreF, found in Ureaplasma parvum serovar 3 (strain ATCC 27815 / 27 / NCTC 11736).